The chain runs to 313 residues: D-alanine--D-alanine ligase (313 aa).

The ATP-grasp domain occupies 108 to 308; it reads KLVWQQLGIP…YQELVVKVLA (201 aa). Residue 138-193 participates in ATP binding; that stretch reads VAKLGLPLFVKPASEGSSVAVIKVKTADALVPALEEAVKFDKIVVVEKSIEGGGEY. Positions 262, 275, and 277 each coordinate Mg(2+).

It belongs to the D-alanine--D-alanine ligase family. Mg(2+) is required as a cofactor. It depends on Mn(2+) as a cofactor.

It is found in the cytoplasm. It catalyses the reaction 2 D-alanine + ATP = D-alanyl-D-alanine + ADP + phosphate + H(+). Its pathway is cell wall biogenesis; peptidoglycan biosynthesis. Functionally, cell wall formation. The polypeptide is D-alanine--D-alanine ligase (Paraburkholderia phymatum (strain DSM 17167 / CIP 108236 / LMG 21445 / STM815) (Burkholderia phymatum)).